A 245-amino-acid polypeptide reads, in one-letter code: 1-(5-phosphoribosyl)-5-[(5-phosphoribosylamino)methylideneamino] imidazole-4-carboxamide isomerase (245 aa).

The active-site Proton acceptor is the aspartate 8. Aspartate 131 functions as the Proton donor in the catalytic mechanism.

It belongs to the HisA/HisF family.

Its subcellular location is the cytoplasm. It catalyses the reaction 1-(5-phospho-beta-D-ribosyl)-5-[(5-phospho-beta-D-ribosylamino)methylideneamino]imidazole-4-carboxamide = 5-[(5-phospho-1-deoxy-D-ribulos-1-ylimino)methylamino]-1-(5-phospho-beta-D-ribosyl)imidazole-4-carboxamide. Its pathway is amino-acid biosynthesis; L-histidine biosynthesis; L-histidine from 5-phospho-alpha-D-ribose 1-diphosphate: step 4/9. This chain is 1-(5-phosphoribosyl)-5-[(5-phosphoribosylamino)methylideneamino] imidazole-4-carboxamide isomerase, found in Neisseria gonorrhoeae (strain NCCP11945).